A 118-amino-acid chain; its full sequence is Acidic phospholipase A2 (118 aa).

Residues Y25, G27, and G29 each coordinate Ca(2+). H45 is an active-site residue. D46 provides a ligand contact to Ca(2+). The active site involves D86.

This sequence belongs to the phospholipase A2 family. Group II subfamily. D49 sub-subfamily. It depends on Ca(2+) as a cofactor. Post-translationally, six disulfide bonds are present. As to expression, expressed by the venom gland.

It localises to the secreted. It catalyses the reaction a 1,2-diacyl-sn-glycero-3-phosphocholine + H2O = a 1-acyl-sn-glycero-3-phosphocholine + a fatty acid + H(+). Functionally, PLA2 catalyzes the calcium-dependent hydrolysis of the 2-acyl groups in 3-sn-phosphoglycerides. The protein is Acidic phospholipase A2 of Bitis gabonica (Gaboon adder).